We begin with the raw amino-acid sequence, 282 residues long: E3 ubiquitin-protein ligase SIAH1 (282 aa).

The segment covering 1-17 (MSRQTATALPTGTSKCP) has biased composition (polar residues). The disordered stretch occupies residues 1-22 (MSRQTATALPTGTSKCPPSQRV). Phosphoserine; by ATM and ATR is present on serine 19. The segment at 41-76 (CPVCFDYVLPPILQCQSGHLVCSNCRPKLTCCPTCR) adopts an RING-type zinc-finger fold. The interval 90 to 282 (VANSVLFPCK…LGINVTISMC (193 aa)) is SBD. The segment at 93 to 153 (SVLFPCKYAS…VMPHLMHQHK (61 aa)) adopts an SIAH-type zinc-finger fold. Zn(2+) is bound by residues cysteine 98, cysteine 105, histidine 117, cysteine 121, cysteine 128, cysteine 135, histidine 147, and histidine 152.

The protein belongs to the SINA (Seven in absentia) family. In terms of assembly, homodimer. Component of some large E3 complex composed of UBE2D1, SIAH1, CACYBP/SIP, SKP1, APC and TBL1X. Interacts with UBE2I. Interacts with alpha-tubulin. Interacts with PEG10, which may inhibit its activity. Interacts with PEG3 and HIPK2. Interacts with group 1 glutamate receptors GRM1 and GRM5. Interacts with DAB1, which may inhibit its activity. Interacts with UBE2E2. Interacts with SNCAIP. Interacts with HIPK2; the interaction is promoted by DAZAP2 and results in SIAH1-mediated ubiquitination and subsequent proteasomal degradation of HIPK2. Interacts with DAZAP2; the interaction is decreased following phosphorylation of DAZAP2 by HIPK2. Interacts with GAPDH; leading to stabilize SIAH1. Interacts with Bassoon/BSN and Piccolo/PLCO; these interactions negatively regulate SIAH1 E3 ligase activity. Interacts with DCC. Interacts with AXIN1; catalyzes AXIN1 ubiquitination and subsequent proteasome-mediated ubiquitin-dependent degradation. Phosphorylated on Ser-19 by ATM and ATR. This phosphorylation disrupts SIAH1 interaction with HIPK2, and subsequent proteasomal degradation of HIPK2.

The protein localises to the cytoplasm. It localises to the nucleus. The catalysed reaction is S-ubiquitinyl-[E2 ubiquitin-conjugating enzyme]-L-cysteine + [acceptor protein]-L-lysine = [E2 ubiquitin-conjugating enzyme]-L-cysteine + N(6)-ubiquitinyl-[acceptor protein]-L-lysine.. It functions in the pathway protein modification; protein ubiquitination. Its function is as follows. E3 ubiquitin-protein ligase that mediates ubiquitination and subsequent proteasomal degradation of target proteins. E3 ubiquitin ligases accept ubiquitin from an E2 ubiquitin-conjugating enzyme in the form of a thioester and then directly transfers the ubiquitin to targeted substrates. Mediates E3 ubiquitin ligase activity either through direct binding to substrates or by functioning as the essential RING domain subunit of larger E3 complexes. Triggers the ubiquitin-mediated degradation of many substrates, including proteins involved in transcription regulation (ELL2, MYB, POU2AF1, PML and RBBP8), a cell surface receptor (DCC), cytoplasmic signal transduction molecules (KLF10/TIEG1 and NUMB), an antiapoptotic protein (BAG1), a microtubule motor protein (KIF22), a protein involved in synaptic vesicle function in neurons (SYP), a structural protein (CTNNB1) and SNCAIP. Confers constitutive instability to HIPK2 through proteasomal degradation. It is thereby involved in many cellular processes such as apoptosis, tumor suppression, cell cycle, axon guidance, transcription, spermatogenesis and TNF-alpha signaling. Has some overlapping function with SIAH2. Induces apoptosis in cooperation with PEG3. Upon nitric oxid (NO) generation that follows apoptotic stimulation, interacts with S-nitrosylated GAPDH, mediating the translocation of GAPDH to the nucleus. GAPDH acts as a stabilizer of SIAH1, facilitating the degradation of nuclear proteins. Mediates ubiquitination and degradation of EGLN2 and EGLN3 in response to the unfolded protein response (UPR), leading to their degradation and subsequent stabilization of ATF4. Also part of the Wnt signaling pathway in which it mediates the Wnt-induced ubiquitin-mediated proteasomal degradation of AXIN1. In Rattus norvegicus (Rat), this protein is E3 ubiquitin-protein ligase SIAH1 (Siah1).